Reading from the N-terminus, the 222-residue chain is PKHD-type hydroxylase PCC8801_2196 (222 aa).

A Fe2OG dioxygenase domain is found at 78 to 175 (RIHSLLFSRY…RLVVVGWIES (98 aa)). Residues H96, D98, and H156 each coordinate Fe cation. 2-oxoglutarate is bound at residue R166.

Requires Fe(2+) as cofactor. L-ascorbate serves as cofactor.

The protein is PKHD-type hydroxylase PCC8801_2196 of Rippkaea orientalis (strain PCC 8801 / RF-1) (Cyanothece sp. (strain PCC 8801)).